A 473-amino-acid polypeptide reads, in one-letter code: Maltose fermentation regulatory protein MAL13 (473 aa).

Positions 13-39 (CDCCRIRRVKCDGKRPCSSCLQNSLDC) form a DNA-binding region, zn(2)-C6 fungal-type. Residues 46-54 (RKRGPKSIR) carry the Nuclear localization signal motif.

Belongs to the MAL13 family.

Its subcellular location is the nucleus. Its function is as follows. Regulates the coordinate transcription of structural MAL1S (maltase) and AGT1 (maltose permease) genes. The polypeptide is Maltose fermentation regulatory protein MAL13 (MAL13) (Saccharomyces cerevisiae (strain ATCC 204508 / S288c) (Baker's yeast)).